Here is a 188-residue protein sequence, read N- to C-terminus: dCTP deaminase (188 aa).

Residues 111-116, 135-137, glutamine 156, tyrosine 170, and glutamine 180 each bind dCTP; these read KSTYAR and TLE. Glutamate 137 serves as the catalytic Proton donor/acceptor.

It belongs to the dCTP deaminase family. In terms of assembly, homotrimer.

The catalysed reaction is dCTP + H2O + H(+) = dUTP + NH4(+). It functions in the pathway pyrimidine metabolism; dUMP biosynthesis; dUMP from dCTP (dUTP route): step 1/2. Its function is as follows. Catalyzes the deamination of dCTP to dUTP. This Neisseria meningitidis serogroup B (strain ATCC BAA-335 / MC58) protein is dCTP deaminase.